A 259-amino-acid chain; its full sequence is 12alpha-hydroxysteroid dehydrogenase (259 aa).

The active-site Proton acceptor is Tyr162.

Belongs to the short-chain dehydrogenases/reductases (SDR) family. As to quaternary structure, homotetramer.

It carries out the reaction cholate + NADP(+) = 3alpha,7alpha-dihydroxy-12-oxo-5beta-cholanate + NADPH + H(+). The catalysed reaction is deoxycholate + NADP(+) = 12-dehydrodeoxycholate + NADPH + H(+). Its function is as follows. Catalyzes the oxidation of the 12alpha-hydroxy group of bile acids, like cholate and deoxycholate. Is also able to catalyze the reverse reaction in vitro. Is likely involved in an epimerization pathway of bile acids that converts hydroxy groups from alpha to beta positions via stable oxo-intermediates, which occurs in the human gut. The protein is 12alpha-hydroxysteroid dehydrogenase of Clostridium sp. (strain ATCC 29733 / VPI C48-50).